The chain runs to 555 residues: Hydroxylamine reductase (555 aa).

Cys-3, Cys-6, Cys-18, and Cys-25 together coordinate [4Fe-4S] cluster. Residues His-252, Glu-276, Cys-320, Cys-407, Cys-435, Cys-460, Glu-494, and Lys-496 each contribute to the hybrid [4Fe-2O-2S] cluster site. Cys-407 carries the post-translational modification Cysteine persulfide.

It belongs to the HCP family. [4Fe-4S] cluster serves as cofactor. It depends on hybrid [4Fe-2O-2S] cluster as a cofactor.

Its subcellular location is the cytoplasm. The catalysed reaction is A + NH4(+) + H2O = hydroxylamine + AH2 + H(+). Catalyzes the reduction of hydroxylamine to form NH(3) and H(2)O. The chain is Hydroxylamine reductase from Burkholderia lata (strain ATCC 17760 / DSM 23089 / LMG 22485 / NCIMB 9086 / R18194 / 383).